Here is a 545-residue protein sequence, read N- to C-terminus: CTP synthase (545 aa).

Positions Met-1–Leu-266 are amidoligase domain. Residue Ser-14 participates in CTP binding. Ser-14 contacts UTP. ATP-binding positions include Ser-15–Ile-20 and Asp-72. Asp-72 and Glu-140 together coordinate Mg(2+). CTP contacts are provided by residues Asp-147–Glu-149, Lys-187–Gln-192, and Lys-223. UTP-binding positions include Lys-187 to Gln-192 and Lys-223. Lys-239–Val-241 serves as a coordination point for ATP. A Glutamine amidotransferase type-1 domain is found at Thr-291–Arg-542. Gly-352 is a binding site for L-glutamine. Cys-379 acts as the Nucleophile; for glutamine hydrolysis in catalysis. Residues Leu-380–Gln-383, Glu-403, and Arg-470 each bind L-glutamine. Residues His-515 and Glu-517 contribute to the active site.

Belongs to the CTP synthase family. In terms of assembly, homotetramer.

The enzyme catalyses UTP + L-glutamine + ATP + H2O = CTP + L-glutamate + ADP + phosphate + 2 H(+). It catalyses the reaction L-glutamine + H2O = L-glutamate + NH4(+). It carries out the reaction UTP + NH4(+) + ATP = CTP + ADP + phosphate + 2 H(+). It participates in pyrimidine metabolism; CTP biosynthesis via de novo pathway; CTP from UDP: step 2/2. Its activity is regulated as follows. Allosterically activated by GTP, when glutamine is the substrate; GTP has no effect on the reaction when ammonia is the substrate. The allosteric effector GTP functions by stabilizing the protein conformation that binds the tetrahedral intermediate(s) formed during glutamine hydrolysis. Inhibited by the product CTP, via allosteric rather than competitive inhibition. Catalyzes the ATP-dependent amination of UTP to CTP with either L-glutamine or ammonia as the source of nitrogen. Regulates intracellular CTP levels through interactions with the four ribonucleotide triphosphates. The protein is CTP synthase of Yersinia pseudotuberculosis serotype O:1b (strain IP 31758).